We begin with the raw amino-acid sequence, 345 residues long: Phosphoribosylformylglycinamidine cyclo-ligase (345 aa).

The protein belongs to the AIR synthase family.

It is found in the cytoplasm. It catalyses the reaction 2-formamido-N(1)-(5-O-phospho-beta-D-ribosyl)acetamidine + ATP = 5-amino-1-(5-phospho-beta-D-ribosyl)imidazole + ADP + phosphate + H(+). The protein operates within purine metabolism; IMP biosynthesis via de novo pathway; 5-amino-1-(5-phospho-D-ribosyl)imidazole from N(2)-formyl-N(1)-(5-phospho-D-ribosyl)glycinamide: step 2/2. The sequence is that of Phosphoribosylformylglycinamidine cyclo-ligase from Shewanella amazonensis (strain ATCC BAA-1098 / SB2B).